The sequence spans 337 residues: S-adenosylmethionine:tRNA ribosyltransferase-isomerase (337 aa).

This sequence belongs to the QueA family. Monomer.

Its subcellular location is the cytoplasm. It catalyses the reaction 7-aminomethyl-7-carbaguanosine(34) in tRNA + S-adenosyl-L-methionine = epoxyqueuosine(34) in tRNA + adenine + L-methionine + 2 H(+). It functions in the pathway tRNA modification; tRNA-queuosine biosynthesis. Transfers and isomerizes the ribose moiety from AdoMet to the 7-aminomethyl group of 7-deazaguanine (preQ1-tRNA) to give epoxyqueuosine (oQ-tRNA). This is S-adenosylmethionine:tRNA ribosyltransferase-isomerase from Legionella pneumophila (strain Corby).